The sequence spans 247 residues: Probable chemoreceptor glutamine deamidase CheD (247 aa).

The segment at 204 to 247 is disordered; the sequence is KRPAAPQPARPRIELFGGRGTAPGAGSPSAGSPYAANLSRKQEA. Residues 227-239 show a composition bias toward low complexity; it reads GAGSPSAGSPYAA.

Belongs to the CheD family.

It carries out the reaction L-glutaminyl-[protein] + H2O = L-glutamyl-[protein] + NH4(+). Its function is as follows. Probably deamidates glutamine residues to glutamate on methyl-accepting chemotaxis receptors (MCPs), playing an important role in chemotaxis. The chain is Probable chemoreceptor glutamine deamidase CheD from Burkholderia orbicola (strain AU 1054).